The following is a 109-amino-acid chain: Cell cycle protein GpsB (109 aa).

A coiled-coil region spans residues 36–63; sequence IKDYETYAALVKSLRQEIADLKEELTRK.

This sequence belongs to the GpsB family. In terms of assembly, forms polymers through the coiled coil domains. Interacts with PBP1, MreC and EzrA.

It localises to the cytoplasm. Divisome component that associates with the complex late in its assembly, after the Z-ring is formed, and is dependent on DivIC and PBP2B for its recruitment to the divisome. Together with EzrA, is a key component of the system that regulates PBP1 localization during cell cycle progression. Its main role could be the removal of PBP1 from the cell pole after pole maturation is completed. Also contributes to the recruitment of PBP1 to the division complex. Not essential for septum formation. This Streptococcus pneumoniae serotype 4 (strain ATCC BAA-334 / TIGR4) protein is Cell cycle protein GpsB.